A 23-amino-acid polypeptide reads, in one-letter code: Paralytic peptide 2 (23 aa).

C7 and C19 are disulfide-bonded.

It belongs to the GBP/PSP1/paralytic peptide family. In terms of tissue distribution, hemolymph.

Causes rapid, rigid paralysis when injected into Lepidopteran larvae. The physiological role may be to reduce hemolymph loss following injury and promote wound healing. The chain is Paralytic peptide 2 from Manduca sexta (Tobacco hawkmoth).